We begin with the raw amino-acid sequence, 431 residues long: MFKTISNFMRVKDIRNKIIFTLLMLIVFRLGSFIPVPHVNTEVLKAQDQMSVFGILNTFGGGALFNFSILAMGIMPYITASIIIQLLQMDVVPKFTEWSKQGEVGRRKLAQFTRYFTIVLGFIQALGMSYGFNNMAGGALITDPGVGTYLLIAIVLTAGTAFLMWLGEQITSHGVGNGISIIIFAGIVAGIPQTINQIYAQQFVDAGDQLFLQIIKVVVILVAILAIVVGVIFIQQAVRKISIQYAKGSGRSPVPGGQSTHLPLKVNPAGVIPVIFAVAFITTPRTVATFFGSNDVTNWIQKTFDYTHPVGMGVYAALIIAFTYFYAFVQVNPEQMADNLKKQGGYIPGVRPGKMTQDRITSILYRLTFVGSIFLAVIAILPVLFVNIAGLPSSAQIGGTSLLIVIGVALETMKQLESQLVKRNYRGFMKH.

Transmembrane regions (helical) follow at residues 18 to 38, 64 to 84, 116 to 136, 146 to 166, 175 to 195, 214 to 234, 262 to 282, 309 to 329, 369 to 389, and 390 to 410; these read IIFT…PVPH, LFNF…SIII, FTIV…NNMA, VGTY…LMWL, VGNG…PQTI, IIKV…VIFI, LPLK…AFIT, PVGM…YAFV, FVGS…VNIA, and GLPS…GVAL.

It belongs to the SecY/SEC61-alpha family. In terms of assembly, component of the Sec protein translocase complex. Heterotrimer consisting of SecY, SecE and SecG subunits. The heterotrimers can form oligomers, although 1 heterotrimer is thought to be able to translocate proteins. Interacts with the ribosome. Interacts with SecDF, and other proteins may be involved. Interacts with SecA.

The protein localises to the cell membrane. Its function is as follows. The central subunit of the protein translocation channel SecYEG. Consists of two halves formed by TMs 1-5 and 6-10. These two domains form a lateral gate at the front which open onto the bilayer between TMs 2 and 7, and are clamped together by SecE at the back. The channel is closed by both a pore ring composed of hydrophobic SecY resides and a short helix (helix 2A) on the extracellular side of the membrane which forms a plug. The plug probably moves laterally to allow the channel to open. The ring and the pore may move independently. This chain is Protein translocase subunit SecY, found in Bacillus licheniformis (strain ATCC 14580 / DSM 13 / JCM 2505 / CCUG 7422 / NBRC 12200 / NCIMB 9375 / NCTC 10341 / NRRL NRS-1264 / Gibson 46).